Here is a 311-residue protein sequence, read N- to C-terminus: Malate dehydrogenase (311 aa).

NAD(+) is bound by residues 7 to 13 and D34; that span reads GAAGGIG. Substrate is bound by residues R81 and R87. Residues N94 and 117-119 contribute to the NAD(+) site; that span reads ITN. 2 residues coordinate substrate: N119 and R153. The active-site Proton acceptor is H177. An NAD(+)-binding site is contributed by M227.

Belongs to the LDH/MDH superfamily. MDH type 1 family. In terms of assembly, homodimer.

It catalyses the reaction (S)-malate + NAD(+) = oxaloacetate + NADH + H(+). Catalyzes the reversible oxidation of malate to oxaloacetate. The sequence is that of Malate dehydrogenase from Erwinia tasmaniensis (strain DSM 17950 / CFBP 7177 / CIP 109463 / NCPPB 4357 / Et1/99).